The following is a 134-amino-acid chain: Ribosome-binding factor A (134 aa).

Belongs to the RbfA family. Monomer. Binds 30S ribosomal subunits, but not 50S ribosomal subunits or 70S ribosomes.

Its subcellular location is the cytoplasm. One of several proteins that assist in the late maturation steps of the functional core of the 30S ribosomal subunit. Associates with free 30S ribosomal subunits (but not with 30S subunits that are part of 70S ribosomes or polysomes). Required for efficient processing of 16S rRNA. May interact with the 5'-terminal helix region of 16S rRNA. The protein is Ribosome-binding factor A of Cyanothece sp. (strain PCC 7425 / ATCC 29141).